The primary structure comprises 451 residues: Trigger factor (451 aa).

Positions 170 to 256 constitute a PPIase FKBP-type domain; that stretch reads DHIATIDYCE…LTALKYKDLP (87 aa).

The protein belongs to the FKBP-type PPIase family. Tig subfamily.

The protein localises to the cytoplasm. It catalyses the reaction [protein]-peptidylproline (omega=180) = [protein]-peptidylproline (omega=0). Its function is as follows. Involved in protein export. Acts as a chaperone by maintaining the newly synthesized protein in an open conformation. Functions as a peptidyl-prolyl cis-trans isomerase. The polypeptide is Trigger factor (Treponema denticola (strain ATCC 35405 / DSM 14222 / CIP 103919 / JCM 8153 / KCTC 15104)).